A 78-amino-acid polypeptide reads, in one-letter code: Major outer membrane lipoprotein Lpp (78 aa).

The signal sequence occupies residues 1–20 (MNRTKLVLGAVILGSTLLAG). Residue cysteine 21 is the site of N-palmitoyl cysteine attachment. Cysteine 21 carries the S-diacylglycerol cysteine lipid modification. Repeats lie at residues 24–34 (NAKIDQLSSDV) and 38–48 (NAKVDQLSNDV). The stretch at 27–75 (IDQLSSDVQTLNAKVDQLSNDVNAIRSDVQAAKDDAARANQRLDNQVRT) forms a coiled coil. Lysine 78 bears the N6-murein peptidoglycan lysine mark.

Belongs to the Lpp family. As to quaternary structure, homotrimer.

The protein localises to the cell outer membrane. Its subcellular location is the secreted. It is found in the cell wall. Functionally, a highly abundant outer membrane lipoprotein that controls the distance between the inner and outer membranes. The only protein known to be covalently linked to the peptidoglycan network (PGN). Also non-covalently binds the PGN. The link between the cell outer membrane and PGN contributes to maintenance of the structural and functional integrity of the cell envelope, and maintains the correct distance between the PGN and the outer membrane. The sequence is that of Major outer membrane lipoprotein Lpp from Pectobacterium atrosepticum (strain SCRI 1043 / ATCC BAA-672) (Erwinia carotovora subsp. atroseptica).